We begin with the raw amino-acid sequence, 302 residues long: D-alanine--D-alanine ligase B (302 aa).

The region spanning Lys-99–Glu-294 is the ATP-grasp domain. Residue Ile-126–Thr-181 participates in ATP binding. Residues Asp-248, Glu-261, and Asn-263 each coordinate Mg(2+).

Belongs to the D-alanine--D-alanine ligase family. Mg(2+) serves as cofactor. The cofactor is Mn(2+).

Its subcellular location is the cytoplasm. The enzyme catalyses 2 D-alanine + ATP = D-alanyl-D-alanine + ADP + phosphate + H(+). It functions in the pathway cell wall biogenesis; peptidoglycan biosynthesis. Functionally, cell wall formation. The polypeptide is D-alanine--D-alanine ligase B (Clostridium perfringens (strain 13 / Type A)).